Consider the following 432-residue polypeptide: Adenylosuccinate synthetase (432 aa).

GTP contacts are provided by residues 13-19 and 41-43; these read GDEGKGK and GHT. Asp14 functions as the Proton acceptor in the catalytic mechanism. Mg(2+) is bound by residues Asp14 and Gly41. Residues 14-17, 39-42, Thr130, Arg144, Gln225, Thr240, and Arg304 contribute to the IMP site; these read DEGK and NAGH. The active-site Proton donor is the His42. 300 to 306 serves as a coordination point for substrate; the sequence is AVTGRPR. GTP is bound by residues Arg306, 332 to 334, and 415 to 417; these read KLD and STG.

This sequence belongs to the adenylosuccinate synthetase family. Homodimer. It depends on Mg(2+) as a cofactor.

The protein localises to the cytoplasm. The catalysed reaction is IMP + L-aspartate + GTP = N(6)-(1,2-dicarboxyethyl)-AMP + GDP + phosphate + 2 H(+). It functions in the pathway purine metabolism; AMP biosynthesis via de novo pathway; AMP from IMP: step 1/2. Functionally, plays an important role in the de novo pathway of purine nucleotide biosynthesis. Catalyzes the first committed step in the biosynthesis of AMP from IMP. This is Adenylosuccinate synthetase from Haemophilus influenzae (strain PittGG).